The following is a 270-amino-acid chain: MMAHLAPLFLLLLLLLLPLHAAATPSAHPAYPNEPPSCAAAVPVPERREAHGGGRILDITHYYREDMPSWESDGGVGQFLWLPASMRNGSRANNSEMRLPTHTGTHVDAPGHVFQHYFDAGFDVDSLDLEVLNGLALLVDVPRDDNITAKMMESLHIPKGIQRVLFRTLNTDRQLMWKKEFDTSYVGFMEDGAQWLVDNTDIKLVGIDYLSVAAFDDLIPSHLVLLKNRDIILVEGLKLENIMPGIYSLHCLPLRLRGAEGSPIRCILIK.

A signal peptide spans 1–23 (MMAHLAPLFLLLLLLLLPLHAAA).

The protein belongs to the Cyclase 1 superfamily. As to expression, highly expressed in leaf sheaths. leaf collars and flag leaves. Expressed in roots, stems, glumes, young panicles and pistils.

The protein resides in the secreted. Its subcellular location is the extracellular space. It is found in the extracellular matrix. Functionally, may be involved in response to stresses. The polypeptide is Cyclase-like protein 3 (Oryza sativa subsp. japonica (Rice)).